A 729-amino-acid chain; its full sequence is Catalase-peroxidase 1 (729 aa).

Positions 98–226 (WHSAGSYRIA…LAAVMMGLIY (129 aa)) form a cross-link, tryptophyl-tyrosyl-methioninium (Trp-Tyr) (with M-252). H99 acts as the Proton acceptor in catalysis. The segment at residues 226–252 (YVNPEGVDGNPDPLRTAKDIRETFARM) is a cross-link (tryptophyl-tyrosyl-methioninium (Tyr-Met) (with W-98)). A heme b-binding site is contributed by H267.

The protein belongs to the peroxidase family. Peroxidase/catalase subfamily. As to quaternary structure, homodimer or homotetramer. The cofactor is heme b. Formation of the three residue Trp-Tyr-Met cross-link is important for the catalase, but not the peroxidase activity of the enzyme.

The enzyme catalyses H2O2 + AH2 = A + 2 H2O. The catalysed reaction is 2 H2O2 = O2 + 2 H2O. Bifunctional enzyme with both catalase and broad-spectrum peroxidase activity. The protein is Catalase-peroxidase 1 of Cellvibrio japonicus (strain Ueda107) (Pseudomonas fluorescens subsp. cellulosa).